A 251-amino-acid polypeptide reads, in one-letter code: MSGEEKLGKLRAKLKEITEQIDDADQKKVEAKHALVDSLARLEKNEVEVNSAKRRIKLIEKDLEDSSERLKVAEEKLIKVEAEEKKIEEARNLLEEAESADDEKMYNIEEEFKESKRTLESNETKYIEAQRKGVVISRDVEKTRDKADTLEKRVAVLEQTIASAGESLVELEEREGESSEREEINEEKLIFLAGQFKESEVRAEAAERSCNVLERNIFETENEINTWIQKRKEIEDEMIEMDTVADEPDDE.

Residues 1–251 are a coiled coil; it reads MSGEEKLGKL…DTVADEPDDE (251 aa).

It belongs to the tropomyosin family. Homodimer. Striated muscle specific.

The sequence is that of Tropomyosin-2 (TPM2) from Podocoryna carnea (Hydrozoan).